Reading from the N-terminus, the 200-residue chain is Thymidylate kinase (200 aa).

An ATP-binding site is contributed by 10 to 17 (GIDGAGKS).

It belongs to the thymidylate kinase family.

It carries out the reaction dTMP + ATP = dTDP + ADP. Its function is as follows. Phosphorylation of dTMP to form dTDP in both de novo and salvage pathways of dTTP synthesis. The protein is Thymidylate kinase of Cupriavidus metallidurans (strain ATCC 43123 / DSM 2839 / NBRC 102507 / CH34) (Ralstonia metallidurans).